We begin with the raw amino-acid sequence, 355 residues long: Peptide chain release factor 1 (355 aa).

The residue at position 233 (Q233) is an N5-methylglutamine.

It belongs to the prokaryotic/mitochondrial release factor family. Post-translationally, methylated by PrmC. Methylation increases the termination efficiency of RF1.

It is found in the cytoplasm. Peptide chain release factor 1 directs the termination of translation in response to the peptide chain termination codons UAG and UAA. The sequence is that of Peptide chain release factor 1 from Syntrophobacter fumaroxidans (strain DSM 10017 / MPOB).